We begin with the raw amino-acid sequence, 125 residues long: Fluoride-specific ion channel FluC (125 aa).

4 helical membrane-spanning segments follow: residues 1 to 21 (MIQA…RYYV), 32 to 52 (AFPW…GVFA), 68 to 88 (LLIT…LDAI), and 101 to 121 (IYIA…LAVM). Na(+) contacts are provided by G75 and T78.

This sequence belongs to the fluoride channel Fluc/FEX (TC 1.A.43) family.

It is found in the cell inner membrane. The catalysed reaction is fluoride(in) = fluoride(out). With respect to regulation, na(+) is not transported, but it plays an essential structural role and its presence is essential for fluoride channel function. Fluoride-specific ion channel. Important for reducing fluoride concentration in the cell, thus reducing its toxicity. The protein is Fluoride-specific ion channel FluC of Rhizobium etli (strain CIAT 652).